The following is a 204-amino-acid chain: Recombination protein RecR (204 aa).

A C4-type zinc finger spans residues 63–78 (CRICCNVADSELCPIC). The region spanning 86 to 181 (NKICVVEQPQ…KVTRLARGLP (96 aa)) is the Toprim domain.

This sequence belongs to the RecR family.

Its function is as follows. May play a role in DNA repair. It seems to be involved in an RecBC-independent recombinational process of DNA repair. It may act with RecF and RecO. The protein is Recombination protein RecR of Dehalococcoides mccartyi (strain ATCC BAA-2100 / JCM 16839 / KCTC 5957 / BAV1).